Here is a 353-residue protein sequence, read N- to C-terminus: Protein Wnt-11b-1 (353 aa).

The signal sequence occupies residues 1-22 (MAQIHHCVTLLLILCCSGLCGA). Asn31, Asn38, and Asn88 each carry an N-linked (GlcNAc...) asparagine glycan. 5 cysteine pairs are disulfide-bonded: Cys78/Cys89, Cys128/Cys136, Cys138/Cys155, Cys208/Cys222, and Cys210/Cys217. A lipid anchor (O-palmitoleoyl serine; by PORCN) is attached at Ser214. Residues Tyr274 and Tyr281 each carry the sulfotyrosine modification. 6 disulfide bridges follow: Cys282-Cys313, Cys298-Cys308, Cys312-Cys352, Cys328-Cys343, Cys330-Cys340, and Cys335-Cys336. Asn299 carries an N-linked (GlcNAc...) asparagine glycan.

The protein belongs to the Wnt family. Homodimer. Secreted homodimers form a complex with wnt5a homodimers; tyrosine sulfation of both wnt11 and wnt5a by tpst1 is required for this interaction. Interacts with the transmembrane receptor fzd7/fz7. Interacts with lrp6 and ryk. Interacts with tdgf1/frl1. Interacts weakly with frzb1 and strongly with frzb2/crescent. Interaction with frzb2/crescent antagonizes wnt11 function in the neuroectoderm, but enhances it in mesodermal tissue. Post-translationally, glycosylation is required for protein secretion. Palmitoleoylation is required for efficient binding to frizzled receptors. Depalmitoleoylation leads to Wnt signaling pathway inhibition.

The protein localises to the secreted. The protein resides in the extracellular space. It localises to the extracellular matrix. Ligand for the frizzled7 transmembrane receptor. Primarily acts via non-canonical Wnt pathways mediated by either Ca(2+) and PKC, or by JNK and dvl2/dsh. Depending on the cellular context, can also signal via the canonical Wnt pathway mediated by beta-catenin and dvl2/dsh. May also inhibit canonical Wnt signaling. Maternally initiates dorsal/ventral axis formation by a canonical route, which signals via lrp6. In a complex with wnt5a, activates the canonical and non-canonical processes involved in axis formation. In the non-canonical pathway, acts through fzd7/fz7 to induce phosphorylation of dvl2/dsh. Signals through a non-canonical Wnt pathway to regulate convergent extension movements during gastrulation. Interactions with the secreted Wnt antagonist sfrp5 to coordinate foregut development, acting via a non-canonical wnt pathway whereby sfrp5 restricts wnt11b activity to prevent inappropriate foregut formation. Mediates cardiogenesis via non-canonical Wnt signaling involving JNK-activation and PKC. Acts redundantly with wnt11/wnt11r during pronephros induction. The sequence is that of Protein Wnt-11b-1 from Xenopus tropicalis (Western clawed frog).